Reading from the N-terminus, the 101-residue chain is Small ribosomal subunit protein uS14 (101 aa).

Belongs to the universal ribosomal protein uS14 family. Part of the 30S ribosomal subunit. Contacts proteins S3 and S10.

Its function is as follows. Binds 16S rRNA, required for the assembly of 30S particles and may also be responsible for determining the conformation of the 16S rRNA at the A site. In Caulobacter sp. (strain K31), this protein is Small ribosomal subunit protein uS14.